A 211-amino-acid polypeptide reads, in one-letter code: Calcipressin-like protein (211 aa).

S113 and S117 each carry phosphoserine. Position 182 is a phosphothreonine (T182).

This sequence belongs to the RCAN family.

In terms of biological role, inhibits calcineurin-dependent transcriptional responses by binding to the catalytic domain of calcineurin. This chain is Calcipressin-like protein (RCN1), found in Saccharomyces cerevisiae (strain ATCC 204508 / S288c) (Baker's yeast).